The chain runs to 168 residues: MAALDIQISVEAEGWSSEENLAAFATKVLNAAVDFLKREEEQPFPKMPVELSLVFTDDENIREINAEWRDKDKATNVLSFPAFPLEPGGMPGPMLGDIVIARETVEREALELDKSFEDHLTHLLVHGFLHLFGYDHMDEEEAEEMESLETRILAVLGLSDPYAGQEPL.

3 residues coordinate Zn(2+): H126, H130, and H136.

Belongs to the endoribonuclease YbeY family. Zn(2+) serves as cofactor.

It is found in the cytoplasm. In terms of biological role, single strand-specific metallo-endoribonuclease involved in late-stage 70S ribosome quality control and in maturation of the 3' terminus of the 16S rRNA. The protein is Endoribonuclease YbeY of Agrobacterium fabrum (strain C58 / ATCC 33970) (Agrobacterium tumefaciens (strain C58)).